The sequence spans 204 residues: Inner membrane-spanning protein YciB (204 aa).

6 helical membrane passes run 3 to 23, 45 to 65, 70 to 90, 107 to 127, 145 to 165, and 168 to 188; these read AEIS…VFFF, IFIA…VSWI, LPIM…LTLW, LFGV…GYVF, WGVF…MFTT, and WVAF…MAQM.

Belongs to the YciB family.

Its subcellular location is the cell inner membrane. Functionally, plays a role in cell envelope biogenesis, maintenance of cell envelope integrity and membrane homeostasis. The polypeptide is Inner membrane-spanning protein YciB (Agrobacterium fabrum (strain C58 / ATCC 33970) (Agrobacterium tumefaciens (strain C58))).